A 305-amino-acid chain; its full sequence is tRNA dimethylallyltransferase (305 aa).

Position 15–22 (15–22) interacts with ATP; that stretch reads GPTASGKS. 17–22 serves as a coordination point for substrate; it reads TASGKS. Interaction with substrate tRNA stretches follow at residues 40 to 43 and 164 to 168; these read DSMQ and QRIVR.

Belongs to the IPP transferase family. In terms of assembly, monomer. It depends on Mg(2+) as a cofactor.

The catalysed reaction is adenosine(37) in tRNA + dimethylallyl diphosphate = N(6)-dimethylallyladenosine(37) in tRNA + diphosphate. Its function is as follows. Catalyzes the transfer of a dimethylallyl group onto the adenine at position 37 in tRNAs that read codons beginning with uridine, leading to the formation of N6-(dimethylallyl)adenosine (i(6)A). In Sinorhizobium medicae (strain WSM419) (Ensifer medicae), this protein is tRNA dimethylallyltransferase.